Consider the following 343-residue polypeptide: Dihydroorotase (343 aa).

Residues H14 and H16 each coordinate Zn(2+). Residues 16-18 (HLR) and N42 each bind substrate. Positions 100, 137, and 175 each coordinate Zn(2+). K100 carries the N6-carboxylysine modification. H137 lines the substrate pocket. L220 serves as a coordination point for substrate. D248 contacts Zn(2+). D248 is an active-site residue. Residues H252 and A264 each contribute to the substrate site.

This sequence belongs to the metallo-dependent hydrolases superfamily. DHOase family. Class II DHOase subfamily. Homodimer. It depends on Zn(2+) as a cofactor.

It catalyses the reaction (S)-dihydroorotate + H2O = N-carbamoyl-L-aspartate + H(+). It functions in the pathway pyrimidine metabolism; UMP biosynthesis via de novo pathway; (S)-dihydroorotate from bicarbonate: step 3/3. Functionally, catalyzes the reversible cyclization of carbamoyl aspartate to dihydroorotate. The polypeptide is Dihydroorotase (Parasynechococcus marenigrum (strain WH8102)).